We begin with the raw amino-acid sequence, 366 residues long: Histone-lysine N-methyltransferase SETD7 (366 aa).

MORN repeat units follow at residues 36–58 (FEGHFVHGEKNGRGKFYFFDGST), 59–81 (LEGFYVDDALQGQGIYTYEDGGS), and 106–128 (FKGQYKDNVRHGVCWIYYPDGGS). Positions 214–336 (ERVYVNDSLI…KDEELTVAYG (123 aa)) constitute an SET domain. S-adenosyl-L-methionine-binding positions include 226 to 228 (AGE), Asn296, and His297.

The protein belongs to the class V-like SAM-binding methyltransferase superfamily. Histone-lysine methyltransferase family. SET7 subfamily.

It localises to the nucleus. It is found in the chromosome. It catalyses the reaction L-lysyl(4)-[histone H3] + S-adenosyl-L-methionine = N(6)-methyl-L-lysyl(4)-[histone H3] + S-adenosyl-L-homocysteine + H(+). The catalysed reaction is L-lysyl-[protein] + S-adenosyl-L-methionine = N(6)-methyl-L-lysyl-[protein] + S-adenosyl-L-homocysteine + H(+). Functionally, histone methyltransferase that specifically monomethylates 'Lys-4' of histone H3. H3 'Lys-4' methylation represents a specific tag for epigenetic transcriptional activation. Plays a central role in the transcriptional activation of genes. Also has methyltransferase activity toward non-histone proteins. The chain is Histone-lysine N-methyltransferase SETD7 (setd7) from Xenopus tropicalis (Western clawed frog).